A 227-amino-acid chain; its full sequence is ATP synthase subunit a (227 aa).

The next 5 membrane-spanning stretches (helical) occupy residues Ala16–Ile36, Leu79–Phe99, Ser105–Ile125, Leu176–Leu196, and Val202–Ile222.

This sequence belongs to the ATPase A chain family. F-type ATPases have 2 components, CF(1) - the catalytic core - and CF(0) - the membrane proton channel. CF(1) has five subunits: alpha(3), beta(3), gamma(1), delta(1), epsilon(1). CF(0) has three main subunits: a(1), b(2) and c(9-12). The alpha and beta chains form an alternating ring which encloses part of the gamma chain. CF(1) is attached to CF(0) by a central stalk formed by the gamma and epsilon chains, while a peripheral stalk is formed by the delta and b chains.

Its subcellular location is the cell inner membrane. Functionally, key component of the proton channel; it plays a direct role in the translocation of protons across the membrane. The polypeptide is ATP synthase subunit a (Campylobacter concisus (strain 13826)).